The chain runs to 313 residues: Ribosomal RNA small subunit methyltransferase H (313 aa).

S-adenosyl-L-methionine is bound by residues glycine 35 to histidine 37, aspartate 55, phenylalanine 79, aspartate 100, and glutamine 107.

The protein belongs to the methyltransferase superfamily. RsmH family.

Its subcellular location is the cytoplasm. It catalyses the reaction cytidine(1402) in 16S rRNA + S-adenosyl-L-methionine = N(4)-methylcytidine(1402) in 16S rRNA + S-adenosyl-L-homocysteine + H(+). Specifically methylates the N4 position of cytidine in position 1402 (C1402) of 16S rRNA. The polypeptide is Ribosomal RNA small subunit methyltransferase H (Burkholderia ambifaria (strain MC40-6)).